The chain runs to 390 residues: Succinyl-diaminopimelate desuccinylase (390 aa).

H74 serves as a coordination point for Zn(2+). Residue D76 is part of the active site. Residue D107 coordinates Zn(2+). E140 functions as the Proton acceptor in the catalytic mechanism. 3 residues coordinate Zn(2+): E141, E169, and H363.

This sequence belongs to the peptidase M20A family. DapE subfamily. As to quaternary structure, homodimer. Zn(2+) serves as cofactor. Co(2+) is required as a cofactor.

It carries out the reaction N-succinyl-(2S,6S)-2,6-diaminopimelate + H2O = (2S,6S)-2,6-diaminopimelate + succinate. The protein operates within amino-acid biosynthesis; L-lysine biosynthesis via DAP pathway; LL-2,6-diaminopimelate from (S)-tetrahydrodipicolinate (succinylase route): step 3/3. Catalyzes the hydrolysis of N-succinyl-L,L-diaminopimelic acid (SDAP), forming succinate and LL-2,6-diaminopimelate (DAP), an intermediate involved in the bacterial biosynthesis of lysine and meso-diaminopimelic acid, an essential component of bacterial cell walls. The protein is Succinyl-diaminopimelate desuccinylase of Bartonella bacilliformis (strain ATCC 35685 / KC583 / Herrer 020/F12,63).